A 207-amino-acid chain; its full sequence is uncharacterized protein (207 aa).

S-adenosyl-L-methionine contacts are provided by Gly-51 and Asp-72.

Belongs to the methyltransferase superfamily. YrrT family.

Its function is as follows. Could be a S-adenosyl-L-methionine-dependent methyltransferase. This is an uncharacterized protein from Staphylococcus carnosus (strain TM300).